The primary structure comprises 598 residues: MSPGNWKTTMVVRGILLILYGLLLQPEPGTATLPLLMDSVIQALAELERKSPATEAGHIASMWLLSAQGSGAHNPLPRFLLEGQSLKTAKLAPPSLSPEFQGLIEEVARHGVQDGKEYGVVLAPDGSTVAVEPLLAGLEAGLQGHRVVNLPLDSTATFPDIGATVPDLKATSSAHKDTSADVNSADVGTLSPNVRDTDVDAEVTFLDVRPSSTGVQVTSPDVQVSSPDTKAKSPTTVDSLLMVTLARDLGLHFLQGAQTESNSGLGTEGCWDQLSLPRTFTLLDPEASPLTMAFLNGALDGALLGDYLSKVPEPRPPLSHLLNQYYGAGVAGDPGLRSNFRRQNGAALTLTPNLTQQVWGTLILLQRLEPAHPQLQGMSQEQLAQVATHAAKEFTEAFLGCPAIHPRCRWGAAPYRGSPKPLKLPLGFLYIHHTYVPARPCTDFALCAANMRSMQRFHLDTQGWDDIGYSFVVGSDGYVYEGRGWHWVGAHTRDHNSRGFGVALIGNYTAELPSEAALRAVRDELPHCAVRAGLLQPDYALLGHRQLVRTDCPGDALFNMLRTWPRFNMNVKPRTARRASGRSKRRLPLMIPLATDLQ.

Positions 1–31 are cleaved as a signal peptide; the sequence is MSPGNWKTTMVVRGILLILYGLLLQPEPGTA. 2 disordered regions span residues 172–194 and 212–233; these read SSAHKDTSADVNSADVGTLSPNV and STGVQVTSPDVQVSSPDTKAKS. Residue Ser261 is modified to Phosphoserine. An N-linked (GlcNAc...) asparagine glycan is attached at Asn353. Positions 428-554 constitute an N-acetylmuramoyl-L-alanine amidase domain; it reads FLYIHHTYVP…RQLVRTDCPG (127 aa). His432 contacts Zn(2+). Cys441 and Cys447 form a disulfide bridge. N-linked (GlcNAc...) asparagine glycosylation occurs at Asn507. His544 and Cys552 together coordinate Zn(2+).

Belongs to the N-acetylmuramoyl-L-alanine amidase 2 family. Zn(2+) serves as cofactor.

The protein localises to the secreted. The protein resides in the membrane. It catalyses the reaction Hydrolyzes the link between N-acetylmuramoyl residues and L-amino acid residues in certain cell-wall glycopeptides.. Functionally, may play a scavenger role by digesting biologically active peptidoglycan (PGN) into biologically inactive fragments. Has no direct bacteriolytic activity. This is N-acetylmuramoyl-L-alanine amidase (PGLYRP2) from Sus scrofa (Pig).